The primary structure comprises 387 residues: Alpha-sarcoglycan (387 aa).

Residues 1-23 form the signal peptide; that stretch reads MAAAVTWIPLLAGLLAGLRDTKA. The Extracellular portion of the chain corresponds to 24 to 293; the sequence is QQTTLHLLVG…RDFLTDALVT (270 aa). Residues Asn174 and Asn246 are each glycosylated (N-linked (GlcNAc...) asparagine). Residues 294-314 traverse the membrane as a helical segment; it reads LLVPLLVALLLTLLLAYIMCF. Over 315–387 the chain is Cytoplasmic; the sequence is RREGRLKRDM…AQMPLILDQH (73 aa). Ser377 bears the Phosphoserine mark.

It belongs to the sarcoglycan alpha/epsilon family. As to quaternary structure, cross-link to form 2 major subcomplexes: one consisting of SGCB, SGCD and SGCG and the other consisting of SGCB and SGCD. The association between SGCB and SGCG is particularly strong while SGCA is loosely associated with the other sarcoglycans. Interacts with the syntrophin SNTA1. As to expression, striated muscle, both skeletal and cardiac.

It is found in the cell membrane. It localises to the sarcolemma. The protein localises to the cytoplasm. The protein resides in the cytoskeleton. In terms of biological role, component of the sarcoglycan complex, a subcomplex of the dystrophin-glycoprotein complex which forms a link between the F-actin cytoskeleton and the extracellular matrix. In Mus musculus (Mouse), this protein is Alpha-sarcoglycan (Sgca).